Here is a 781-residue protein sequence, read N- to C-terminus: uncharacterized protein (781 aa).

The tract at residues 1-34 (MNIAEEPSDEVISSGPEDTDICSQQTSASAEAGD) is disordered. The residue at position 29 (Ser29) is a Phosphoserine. 2 RRM domains span residues 195-273 (GNIF…YHVE) and 295-418 (RCLF…KAVQ). Residues 345-375 (SNTRSSSSVSFNEEGSVESNKSSNNTNGNAQ) are disordered. The segment covering 347–364 (TRSSSSVSFNEEGSVESN) has biased composition (low complexity). Residues 365-374 (KSSNNTNGNA) show a composition bias toward polar residues. A phosphoserine mark is found at Ser433, Ser435, Ser482, and Ser485. Thr486 bears the Phosphothreonine mark. Ser501 is subject to Phosphoserine. Residues 540–638 (SNLYVKHIPL…QVLSVSFAQK (99 aa)) enclose the RRM 3 domain. Residues 640–668 (GNLSSSDDDDQSQTDNSSKFQNFQPHNDY) are disordered.

Interacts with RBG1.

This is an uncharacterized protein from Saccharomyces cerevisiae (strain ATCC 204508 / S288c) (Baker's yeast).